A 462-amino-acid polypeptide reads, in one-letter code: tRNA modification GTPase MnmE (462 aa).

Arg34, Glu92, and Lys131 together coordinate (6S)-5-formyl-5,6,7,8-tetrahydrofolate. The TrmE-type G domain occupies 227-386 (GLQVVIAGKP…LIDAITAHAG (160 aa)). Residue Asn237 participates in K(+) binding. GTP-binding positions include 237–242 (NAGKSS), 256–262 (TDIAGTT), and 281–284 (DTAG). Ser241 serves as a coordination point for Mg(2+). The K(+) site is built by Thr256, Ile258, and Thr261. Thr262 contributes to the Mg(2+) binding site. A (6S)-5-formyl-5,6,7,8-tetrahydrofolate-binding site is contributed by Lys462.

This sequence belongs to the TRAFAC class TrmE-Era-EngA-EngB-Septin-like GTPase superfamily. TrmE GTPase family. In terms of assembly, homodimer. Heterotetramer of two MnmE and two MnmG subunits. Requires K(+) as cofactor.

Its subcellular location is the cytoplasm. Functionally, exhibits a very high intrinsic GTPase hydrolysis rate. Involved in the addition of a carboxymethylaminomethyl (cmnm) group at the wobble position (U34) of certain tRNAs, forming tRNA-cmnm(5)s(2)U34. This is tRNA modification GTPase MnmE from Acinetobacter baylyi (strain ATCC 33305 / BD413 / ADP1).